Reading from the N-terminus, the 477-residue chain is Ribulose bisphosphate carboxylase large chain (477 aa).

A propeptide spanning residues 1–2 (MS) is cleaved from the precursor. An N-acetylproline modification is found at Pro3. Lys14 carries the N6,N6,N6-trimethyllysine modification. The substrate site is built by Asn123 and Thr173. Lys175 acts as the Proton acceptor in catalysis. Lys177 provides a ligand contact to substrate. Residues Lys201, Asp203, and Glu204 each coordinate Mg(2+). Lys201 is modified (N6-carboxylysine). Catalysis depends on His294, which acts as the Proton acceptor. Arg295, His327, and Ser379 together coordinate substrate.

Belongs to the RuBisCO large chain family. Type I subfamily. In terms of assembly, heterohexadecamer of 8 large chains and 8 small chains; disulfide-linked. The disulfide link is formed within the large subunit homodimers. Mg(2+) serves as cofactor. In terms of processing, the disulfide bond which can form in the large chain dimeric partners within the hexadecamer appears to be associated with oxidative stress and protein turnover.

It is found in the plastid. The protein resides in the chloroplast. The catalysed reaction is 2 (2R)-3-phosphoglycerate + 2 H(+) = D-ribulose 1,5-bisphosphate + CO2 + H2O. It carries out the reaction D-ribulose 1,5-bisphosphate + O2 = 2-phosphoglycolate + (2R)-3-phosphoglycerate + 2 H(+). Its function is as follows. RuBisCO catalyzes two reactions: the carboxylation of D-ribulose 1,5-bisphosphate, the primary event in carbon dioxide fixation, as well as the oxidative fragmentation of the pentose substrate in the photorespiration process. Both reactions occur simultaneously and in competition at the same active site. This Carthamus tinctorius (Safflower) protein is Ribulose bisphosphate carboxylase large chain.